We begin with the raw amino-acid sequence, 604 residues long: Dopamine receptor 3 (604 aa).

At 1 to 23 (MLTGQHHIPGIESPLMVVLWRVA) the chain is on the extracellular side. Residues 24-44 (AGVFLPLVPTMAVFGNVLVIL) traverse the membrane as a helical segment. At 45-58 (SVYRERNLQTVTNM) the chain is on the cytoplasmic side. The chain crosses the membrane as a helical span at residues 59–79 (LIVSLAVSDLFVAIGVMSFGV). Residues 80–96 (YYEWNGFKWGLGSFFCH) are Extracellular-facing. An intrachain disulfide couples cysteine 95 to cysteine 170. A helical transmembrane segment spans residues 97–117 (VYQALDVACSTASILNLLAIS). Over 118–141 (LDRYIAIGHPISYAQYGARGGRAM) the chain is Cytoplasmic. The chain crosses the membrane as a helical span at residues 142–162 (ISITIVWGVSCAVALPLLLGV). The Extracellular portion of the chain corresponds to 163–179 (NPMENDQCELANPWFNM). The helical transmembrane segment at 180 to 200 (ISSIFSFFIPCIAMIILYTII) threads the bilayer. The Cytoplasmic segment spans residues 201 to 520 (FRRLRQRERA…TKQMRREHKA (320 aa)). The disordered stretch occupies residues 399-430 (SIQDEKKMNSRPPENPFAHQNGTNKQRLLPNP). Residues 521 to 541 (TVTLAVVLAVFLFCWLPFFIL) traverse the membrane as a helical segment. The Extracellular portion of the chain corresponds to 542 to 559 (HLSNSICLVIDSNSDCIG). Residues 560–580 (FLPLYLATWLGYLNSSLNPLI) traverse the membrane as a helical segment. Over 581 to 604 (YTVFDQRFRNAFRNILSCGFFKKR) the chain is Cytoplasmic.

This sequence belongs to the G-protein coupled receptor 1 family.

Its subcellular location is the cell membrane. Functionally, receptor for dopamine. The activity of this receptor is mediated by G proteins which activate adenylyl cyclase. In terms of antagonist responses, would be classed with the D2-like dopamine receptor group. Mediates the effect of dopamine on the inhibition of locomotion. Acts as an antagonist of dop-1. This Caenorhabditis briggsae protein is Dopamine receptor 3.